The sequence spans 1465 residues: DNA polymerase III PolC-type (1465 aa).

The region spanning 431 to 583 is the Exonuclease domain; that stretch reads DVETTGLSAM…YDAEATGRLL (153 aa).

Belongs to the DNA polymerase type-C family. PolC subfamily.

The protein localises to the cytoplasm. The enzyme catalyses DNA(n) + a 2'-deoxyribonucleoside 5'-triphosphate = DNA(n+1) + diphosphate. In terms of biological role, required for replicative DNA synthesis. This DNA polymerase also exhibits 3' to 5' exonuclease activity. The polypeptide is DNA polymerase III PolC-type (Streptococcus pyogenes).